We begin with the raw amino-acid sequence, 1049 residues long: Cellulose synthase A catalytic subunit 4 [UDP-forming] (1049 aa).

Residues 1-215 (MEPNTMASFD…ISSSKISPYR (215 aa)) are Cytoplasmic-facing. Zn(2+) contacts are provided by cysteine 23, cysteine 26, cysteine 42, cysteine 45, cysteine 50, cysteine 53, cysteine 65, and cysteine 68. Residues 23–69 (CKVCGDEVKDDDNGQTFVACHVCVYPVCKPCYEYERSNGNKCCPQCN) form an RING-type; degenerate zinc finger. The interval 76-98 (KGSPKIAGDEENNGPDDSDDELN) is disordered. Positions 84 to 96 (DEENNGPDDSDDE) are enriched in acidic residues. The residue at position 135 (serine 135) is a Phosphoserine. A helical membrane pass occupies residues 216–236 (IVIVLRLVILVFFFRFRILTP). The Extracellular portion of the chain corresponds to 237–239 (AKD). The chain crosses the membrane as a helical span at residues 240–260 (AYPLWLISVICEIWFALSWIL). Residues 261–831 (DQFPKWFPIN…INTIVYPFTS (571 aa)) lie on the Cytoplasmic side of the membrane. Positions 299, 305, 306, and 335 each coordinate UDP-alpha-D-glucose. The active site involves aspartate 335. Residues 389–416 (VKDRRAMKREYEEFKVRINALVAKAQKK) are a coiled coil. Lysine 476 contributes to the UDP-alpha-D-glucose binding site. Positions 477 and 501 each coordinate Mn(2+). The active site involves aspartate 748. A helical membrane pass occupies residues 832 to 852 (IPLLAYCTIPAVCLLTGKFII). At 853–857 (PTINN) the chain is on the extracellular side. The chain crosses the membrane as a helical span at residues 858–878 (FASIWFLALFLSIIATAILEL). The Cytoplasmic segment spans residues 879–895 (RWSGVSINDLWRNEQFW). Residues 896–916 (VIGGVSAHLFAVFQGLLKVLF) traverse the membrane as a helical segment. Over 917 to 945 (GVDTNFTVTSKGASDEADEFGDLYLFKWT) the chain is Extracellular. N-linked (GlcNAc...) asparagine glycosylation is present at asparagine 921. Residues 946–966 (TLLIPPTTLIILNMVGVVAGV) traverse the membrane as a helical segment. Residues 967-977 (SDAINNGYGSW) are Cytoplasmic-facing. Residues 978-998 (GPLFGKLFFAFWVIVHLYPFL) traverse the membrane as a helical segment. At 999–1007 (KGLMGRQNR) the chain is on the extracellular side. The chain crosses the membrane as a helical span at residues 1008–1028 (TPTIVVLWSILLASIFSLVWV). Residues 1029-1049 (RIDPFLPKQTGPLLKQCGVDC) lie on the Cytoplasmic side of the membrane.

Belongs to the glycosyltransferase 2 family. Plant cellulose synthase subfamily. In terms of assembly, interacts with CESA7 and CESA8. Assembly with CESA7 and CESA8 is required for functional complex and localization in secondary cell wall deposition sites. Interacts with STL1 and STL2, but not with GOT1. Zn(2+) serves as cofactor. Mn(2+) is required as a cofactor. S-acylated. In terms of tissue distribution, confined to secondary cell wall developing tissues such as xylems and interfascicular regions. Expressed in roots, hypocotyls, leaves, inflorescences and flowers.

It localises to the cell membrane. It carries out the reaction [(1-&gt;4)-beta-D-glucosyl](n) + UDP-alpha-D-glucose = [(1-&gt;4)-beta-D-glucosyl](n+1) + UDP + H(+). It participates in glycan metabolism; plant cellulose biosynthesis. Catalytic subunit of cellulose synthase terminal complexes ('rosettes'), required for beta-1,4-glucan microfibril crystallization, a major mechanism of the cell wall formation. Involved in the secondary cell wall formation. Required for the xylem cell wall thickening. In Arabidopsis thaliana (Mouse-ear cress), this protein is Cellulose synthase A catalytic subunit 4 [UDP-forming].